The chain runs to 147 residues: Lipoprotein YfjS (147 aa).

The signal sequence occupies residues 1 to 20 (MKRKTLPLLALVATSLFLSA). C21 is lipidated: N-palmitoyl cysteine. A lipid anchor (S-diacylglycerol cysteine) is attached at C21.

It to E.coli YafY.

The protein resides in the cell inner membrane. Does not induce degP when overexpressed unless it is mutated to resemble YafY. The protein is Lipoprotein YfjS (yfjS) of Escherichia coli (strain K12).